Reading from the N-terminus, the 910-residue chain is Harmonin (910 aa).

An N-terminal domain region spans residues 1–86; the sequence is MDRKVAREFR…LTPRRSRKLK (86 aa). 2 PDZ domains span residues 87 to 171 and 211 to 295; these read EVRL…GLIP and KVFI…AGRE. The segment at 194–833 is mediates interaction with MYO7B; it reads GVRGGLGSPG…KAWNQGGDWI (640 aa). Residue Ser219 is modified to Phosphoserine. Coiled-coil stretches lie at residues 299–377 and 417–482; these read TDRE…WEED and TIRK…DLEE. Residues 563 to 688 are disordered; the sequence is VMPHPPSVNS…PPRGPGVSTI (126 aa). Residues 564–582 show a composition bias toward pro residues; the sequence is MPHPPSVNSPSKVPAPPVL. A compositionally biased stretch (low complexity) spans 583–596; sequence PSSGHVSSSSSPWV. Residues 599–611 show a composition bias toward pro residues; sequence TPPPIPIPPPPSI. Polar residues predominate over residues 650-664; the sequence is NTHSGKPSSSPTTER. The PDZ 3 domain maps to 752-839; sequence DVRLLRIKKE…GDWIDLVVAV (88 aa). Positions 890–910 are disordered; the sequence is KSRERNQTDPSWRPASSAPSP. The span at 899 to 910 shows a compositional bias: low complexity; the sequence is PSWRPASSAPSP.

In terms of assembly, part of the IMAC/intermicrovillar adhesion complex/intermicrovillar tip-link complex composed of ANKS4B, MYO7B, USH1C, CDHR2 and CDHR5. Part of a complex composed of USH1C, USH1G and MYO7A. Interacts with F-actin. Interacts with USH2A. Interacts with SLC4A7. Interacts (via PDZ1 domain) with the C-terminus of USHBP1. Interacts (via N-terminus and PDZ 2 domain) with CDH23. Interacts with USH1G. Interacts with MYO7B. Interacts with CDHR2 and CDHR5; may mediate their interaction with MYO7B at the microvilli tip. Interacts (via PDZ 1 domain) with ANKS4B. Interacts (via PDZ 1 domain) with DOCK4. As to expression, detected in stereocilia of cochlear hair cells (at protein level). Isoform 1 is expressed in the eye, cochlea, vestibule, heart, kidney, small intestine and testis; it is barely visible in skeletal muscle, liver, and lung and is absent from the brain. Isoforms 2 and 3 are expressed in the cochlea and vestibule.

The protein localises to the cytoplasm. It is found in the cytosol. It localises to the cytoskeleton. Its subcellular location is the cell projection. The protein resides in the microvillus. Anchoring/scaffolding protein that is a part of the functional network formed by USH1C, USH1G, CDH23 and MYO7A that mediates mechanotransduction in cochlear hair cells. Required for normal development and maintenance of cochlear hair cell bundles. As part of the intermicrovillar adhesion complex/IMAC plays a role in brush border differentiation, controlling microvilli organization and length. Probably plays a central regulatory role in the assembly of the complex, recruiting CDHR2, CDHR5 and MYO7B to the microvilli tips. The chain is Harmonin (Ush1c) from Mus musculus (Mouse).